The following is a 270-amino-acid chain: Glutamate racemase (270 aa).

Residues aspartate 14–serine 15 and tyrosine 46–glycine 47 contribute to the substrate site. The active-site Proton donor/acceptor is cysteine 77. Residue asparagine 78–threonine 79 coordinates substrate. The active-site Proton donor/acceptor is cysteine 189. Threonine 190–histidine 191 is a binding site for substrate.

The protein belongs to the aspartate/glutamate racemases family.

The catalysed reaction is L-glutamate = D-glutamate. It functions in the pathway cell wall biogenesis; peptidoglycan biosynthesis. Functionally, provides the (R)-glutamate required for cell wall biosynthesis. The sequence is that of Glutamate racemase from Neisseria meningitidis serogroup A / serotype 4A (strain DSM 15465 / Z2491).